We begin with the raw amino-acid sequence, 418 residues long: UDP-N-acetylglucosamine 1-carboxyvinyltransferase (418 aa).

22–23 (KN) is a binding site for phosphoenolpyruvate. Arg-91 provides a ligand contact to UDP-N-acetyl-alpha-D-glucosamine. The Proton donor role is filled by Cys-115. A 2-(S-cysteinyl)pyruvic acid O-phosphothioketal modification is found at Cys-115. Residues 120 to 124 (RPVDL), 160 to 163 (KVSV), Asp-305, and Ile-327 contribute to the UDP-N-acetyl-alpha-D-glucosamine site.

Belongs to the EPSP synthase family. MurA subfamily.

The protein localises to the cytoplasm. It carries out the reaction phosphoenolpyruvate + UDP-N-acetyl-alpha-D-glucosamine = UDP-N-acetyl-3-O-(1-carboxyvinyl)-alpha-D-glucosamine + phosphate. Its pathway is cell wall biogenesis; peptidoglycan biosynthesis. Functionally, cell wall formation. Adds enolpyruvyl to UDP-N-acetylglucosamine. This Baumannia cicadellinicola subsp. Homalodisca coagulata protein is UDP-N-acetylglucosamine 1-carboxyvinyltransferase.